The chain runs to 532 residues: Amidophosphoribosyltransferase 3, chloroplastic (532 aa).

A chloroplast-targeting transit peptide spans 1-59 (MAFSVEEISSILPNSLSANPRNVSQNTISPSFFKPSLKPYASKTLISLSCRRSLSPVFS). The Nucleophile role is filled by Cys-77. Residues 77 to 296 (CGVVGIHGDP…PGEIVVVDRN (220 aa)) form the Glutamine amidotransferase type-2 domain. The [4Fe-4S] cluster site is built by Cys-313, Cys-459, Cys-511, and Cys-514.

In the C-terminal section; belongs to the purine/pyrimidine phosphoribosyltransferase family. [4Fe-4S] cluster serves as cofactor. It depends on Mg(2+) as a cofactor. As to expression, mostly expressed at low levels in leaves, and, to a lower extent, in cotyledons.

The protein localises to the plastid. It is found in the chloroplast stroma. The enzyme catalyses 5-phospho-beta-D-ribosylamine + L-glutamate + diphosphate = 5-phospho-alpha-D-ribose 1-diphosphate + L-glutamine + H2O. The protein operates within purine metabolism; IMP biosynthesis via de novo pathway; N(1)-(5-phospho-D-ribosyl)glycinamide from 5-phospho-alpha-D-ribose 1-diphosphate: step 1/2. Its activity is regulated as follows. Inhibited by the phenyltriazole acetic acid compound [5-(4-chlorophenyl)-1-isopropyl-1H-[1,2,4]triazol-3-yl]-acetic acid (DAS734), a bleaching herbicide. Repressed by AMP, ADP, ATP and GTP, and slightly by GMP. Catalyzes the first committed step of 'de novo' purine biosynthesis from glutamine. This chain is Amidophosphoribosyltransferase 3, chloroplastic (ASE3), found in Arabidopsis thaliana (Mouse-ear cress).